The primary structure comprises 239 residues: NAD-dependent protein deacylase (239 aa).

Residues 1 to 239 form the Deacetylase sirtuin-type domain; the sequence is MNVLILTGAG…PKLLNHFSAM (239 aa). 8–27 is a binding site for NAD(+); that stretch reads GAGISAESGIPTFRDANGLW. Y52 and R55 together coordinate substrate. 93–96 contacts NAD(+); sequence QNID. H111 acts as the Proton acceptor in catalysis. NAD(+) contacts are provided by residues 182–184, 207–209, and A225; these read GTS and NLD.

Belongs to the sirtuin family. Class III subfamily.

It is found in the cytoplasm. The enzyme catalyses N(6)-acetyl-L-lysyl-[protein] + NAD(+) + H2O = 2''-O-acetyl-ADP-D-ribose + nicotinamide + L-lysyl-[protein]. The catalysed reaction is N(6)-succinyl-L-lysyl-[protein] + NAD(+) + H2O = 2''-O-succinyl-ADP-D-ribose + nicotinamide + L-lysyl-[protein]. NAD-dependent lysine deacetylase and desuccinylase that specifically removes acetyl and succinyl groups on target proteins. Modulates the activities of several proteins which are inactive in their acylated form. The protein is NAD-dependent protein deacylase of Rhodopirellula baltica (strain DSM 10527 / NCIMB 13988 / SH1).